The primary structure comprises 38 residues: Photosystem II reaction center protein M (38 aa).

The chain crosses the membrane as a helical span at residues I5–L25.

The protein belongs to the PsbM family. In terms of assembly, PSII is composed of 1 copy each of membrane proteins PsbA, PsbB, PsbC, PsbD, PsbE, PsbF, PsbH, PsbI, PsbJ, PsbK, PsbL, PsbM, PsbT, PsbX, PsbY, PsbZ, Psb30/Ycf12, at least 3 peripheral proteins of the oxygen-evolving complex and a large number of cofactors. It forms dimeric complexes.

It localises to the plastid. It is found in the cyanelle thylakoid membrane. Its function is as follows. One of the components of the core complex of photosystem II (PSII). PSII is a light-driven water:plastoquinone oxidoreductase that uses light energy to abstract electrons from H(2)O, generating O(2) and a proton gradient subsequently used for ATP formation. It consists of a core antenna complex that captures photons, and an electron transfer chain that converts photonic excitation into a charge separation. This subunit is found at the monomer-monomer interface. In Cyanophora paradoxa, this protein is Photosystem II reaction center protein M.